Reading from the N-terminus, the 530-residue chain is Lysine--tRNA ligase (530 aa).

The 'HIGH' region signature appears at 28 to 36 (PSGHIHVGN). A 'KMSKS' region motif is present at residues 278–282 (PMSSS).

This sequence belongs to the class-I aminoacyl-tRNA synthetase family.

It is found in the cytoplasm. The enzyme catalyses tRNA(Lys) + L-lysine + ATP = L-lysyl-tRNA(Lys) + AMP + diphosphate. This Methanocaldococcus jannaschii (strain ATCC 43067 / DSM 2661 / JAL-1 / JCM 10045 / NBRC 100440) (Methanococcus jannaschii) protein is Lysine--tRNA ligase (lysS).